The chain runs to 207 residues: Large ribosomal subunit protein bL25 (207 aa).

It belongs to the bacterial ribosomal protein bL25 family. CTC subfamily. In terms of assembly, part of the 50S ribosomal subunit; part of the 5S rRNA/L5/L18/L25 subcomplex. Contacts the 5S rRNA. Binds to the 5S rRNA independently of L5 and L18.

Functionally, this is one of the proteins that binds to the 5S RNA in the ribosome where it forms part of the central protuberance. The sequence is that of Large ribosomal subunit protein bL25 from Brucella canis (strain ATCC 23365 / NCTC 10854 / RM-666).